The following is a 1086-amino-acid chain: WD repeat-containing protein 64 (1086 aa).

9 WD repeats span residues 129 to 168 (RRRDVIKCIVKVPQLDLLITASQKGLITVFNSQDTSWITG), 170 to 199 (DYLGQLKRIVATTERTIIVWDYKAQGSSQE), 321 to 360 (AMPRGANSFCYCGKANVIVTGGDDKVLRLWHPNISTKPVG), 364 to 403 (GHMFSITEIVSNEKEQHVISLSSAKVFRVWDIQTLSVLQV), 411 to 448 (PGDMQIYSMVYDANHGMLITGSGVIDMYPLTRMIQDTK), 453 to 492 (THEREVNVTLYNKYFHQVLTVCSESVIKVWELETGLQIYQ), 498 to 537 (GLSIELTCAAIDESGYLFATGAYNGTVKIWDFGSGQEMKM), 560 to 602 (QVKQ…PYLQ), and 642 to 683 (IVDV…VKEI). The interval 724–749 (ICSSTQCDSSKGPQSSKGSKQSIHDA) is disordered. A compositionally biased stretch (low complexity) spans 732–744 (SSKGPQSSKGSKQ). WD repeat units lie at residues 765-806 (ASRK…KDML), 809-850 (TKHS…DPPH), and 863-902 (AHSLEIIQVIYVEEKQLVLTASIDGSVRIWNSTSGHYCGY). Residues 1047–1069 (DKVKREEAPEMTEGSRRKSLKRN) are disordered. The span at 1049-1062 (VKREEAPEMTEGSR) shows a compositional bias: basic and acidic residues.

This chain is WD repeat-containing protein 64 (Wdr64), found in Mus musculus (Mouse).